A 285-amino-acid chain; its full sequence is 1-deoxypentalenic acid 11-beta-hydroxylase (285 aa).

Arg117 is a binding site for substrate. Fe cation is bound by residues His137 and Asp139. 2-oxoglutarate is bound by residues 137 to 139 and Trp153; that span reads HQD. Residue Arg188 coordinates substrate. His226 is a binding site for Fe cation. Residues Ser228 and Arg240 each coordinate 2-oxoglutarate.

Belongs to the PhyH family. The cofactor is Fe cation. L-ascorbate is required as a cofactor.

The enzyme catalyses 1-deoxypentalenate + 2-oxoglutarate + O2 = 1-deoxy-11beta-hydroxypentalenate + succinate + CO2. It functions in the pathway antibiotic biosynthesis; neopentalenolactone biosynthesis. Its function is as follows. Catalyzes the conversion of 1-deoxypentalenic acid to 11-beta-hydroxy-1-deoxypentalenic acid in the biosynthesis of neopentalenolactone antibiotic. In Streptomyces avermitilis (strain ATCC 31267 / DSM 46492 / JCM 5070 / NBRC 14893 / NCIMB 12804 / NRRL 8165 / MA-4680), this protein is 1-deoxypentalenic acid 11-beta-hydroxylase (ptlH).